Here is a 288-residue protein sequence, read N- to C-terminus: Small ribosomal subunit protein uS3 (288 aa).

The KH type-2 domain occupies Ile38–Lys106. Positions Pro209–Gly288 are disordered. Residues Ser219 to Pro232 show a composition bias toward basic and acidic residues. Residues Ala249–Pro264 are compositionally biased toward low complexity. Polar residues predominate over residues Ala277–Gly288.

The protein belongs to the universal ribosomal protein uS3 family. Part of the 30S ribosomal subunit. Forms a tight complex with proteins S10 and S14.

Binds the lower part of the 30S subunit head. Binds mRNA in the 70S ribosome, positioning it for translation. The protein is Small ribosomal subunit protein uS3 of Salinispora tropica (strain ATCC BAA-916 / DSM 44818 / JCM 13857 / NBRC 105044 / CNB-440).